The following is a 126-amino-acid chain: Lymphocyte antigen 6E (126 aa).

Residues 1-20 (MKAFLFAVLAAVLCVERAHT) form the signal peptide. Residues 21–98 (LICFSCSDAS…CCDSFLCNIS (78 aa)) form the UPAR/Ly6 domain. 5 disulfides stabilise this stretch: C23-C48, C26-C35, C41-C69, C73-C89, and C90-C95. Residue N96 is glycosylated (N-linked (GlcNAc...) asparagine). Residue S98 is the site of GPI-anchor amidated serine attachment. Positions 99–126 (GSSSVKASYAVLALGILVSFVYVLRARE) are cleaved as a propeptide — removed in mature form.

Expressed by thymic blast cells.

Its subcellular location is the cell membrane. The protein is Lymphocyte antigen 6E (LY6E) of Gallus gallus (Chicken).